A 468-amino-acid polypeptide reads, in one-letter code: BTB/POZ domain-containing protein 17 (468 aa).

A signal peptide spans Met-1–Ala-16. The BTB domain maps to Thr-51–Leu-120. The 101-residue stretch at Val-159–Gln-259 folds into the BACK domain.

It is found in the secreted. In Xenopus tropicalis (Western clawed frog), this protein is BTB/POZ domain-containing protein 17 (btbd17).